Here is a 341-residue protein sequence, read N- to C-terminus: Zinc finger protein ZIC 4 (341 aa).

The interval 36-66 is disordered; that stretch reads HHGPQLAASSNPSVLPGLHEQPPQASHSRPL. The C2H2-type 1; atypical zinc finger occupies 135–169; that stretch reads LICKWLGDDSPMSPRPCSKTFSTMHELVTHVTVEH. The C2H2-type 2; atypical zinc-finger motif lies at 178–205; sequence HICFWEECPRQGKPFKAKYKLVNHIRVH. C2H2-type zinc fingers lie at residues 211–235, 241–265, and 271–295; these read FPCP…KRTH, FRCE…SHVH, and YMCK…MKVH. The segment at 289 to 309 is disordered; the sequence is RKHMKVHGRSPPPSSGYDSAI.

Belongs to the GLI C2H2-type zinc-finger protein family. In terms of tissue distribution, exclusively expressed in the cerebellum.

It localises to the nucleus. Binds to DNA. In Mus musculus (Mouse), this protein is Zinc finger protein ZIC 4 (Zic4).